The primary structure comprises 357 residues: Mitogen-activated protein kinase kinase SIPKK (357 aa).

A Protein kinase domain is found at 70-330 (FEAVKVIGKG…ANELMRHPFI (261 aa)). ATP-binding positions include 76–84 (IGKGNGGIV) and lysine 99. The active-site Proton acceptor is aspartate 192.

It belongs to the protein kinase superfamily. STE Ser/Thr protein kinase family. MAP kinase kinase subfamily. In terms of assembly, interacts with SIPK.

The catalysed reaction is L-tyrosyl-[protein] + ATP = O-phospho-L-tyrosyl-[protein] + ADP + H(+). It catalyses the reaction L-seryl-[protein] + ATP = O-phospho-L-seryl-[protein] + ADP + H(+). The enzyme catalyses L-threonyl-[protein] + ATP = O-phospho-L-threonyl-[protein] + ADP + H(+). Functionally, phosphorylates myelin basic protein (MBP) in vitro. May be involved in disease resistance. This is Mitogen-activated protein kinase kinase SIPKK from Nicotiana tabacum (Common tobacco).